The primary structure comprises 326 residues: UDP-N-acetylglucosamine transporter (326 aa).

Transmembrane regions (helical) follow at residues 8–24, 42–58, 138–154, 174–190, 210–226, 247–263, 269–285, and 296–312; these read LSLGILVFQTTSLVLTM, AVVVAELLKIMACILLV, VYQWLSLVILMTGVAFV, FVGLMAVLTACFSSGFA, IQLGFFGSIFGLMGVYI, IVVILQALGGLVIAAVI, ILKGFATSLSIILSTLI, and TSVFFLGAILVITATFL.

It belongs to the nucleotide-sugar transporter family. SLC35A subfamily. As to quaternary structure, interacts with SLC35A2; the interaction is reduced in the presence of SLC35A4. Found in a complex with SLC35A2 and SLC35A4.

The protein localises to the golgi apparatus membrane. Functionally, uridine diphosphate-N-acetylglucosamine (UDP-GlcNAc) transporter in the Golgi apparatus. May supply UDP-GlcNAc as substrate for Golgi-resident glycosyltransferases that generate branching of diantennary oligosaccharides. The sequence is that of UDP-N-acetylglucosamine transporter (SLC35A3) from Canis lupus familiaris (Dog).